The sequence spans 134 residues: Profilin-1 (134 aa).

An intrachain disulfide couples C13 to C118. The Involved in PIP2 interaction motif lies at A84 to T100. A Phosphothreonine modification is found at T114.

It belongs to the profilin family. In terms of assembly, occurs in many kinds of cells as a complex with monomeric actin in a 1:1 ratio. Post-translationally, phosphorylated by MAP kinases.

The protein resides in the cytoplasm. Its subcellular location is the cytoskeleton. In terms of biological role, binds to actin and affects the structure of the cytoskeleton. At high concentrations, profilin prevents the polymerization of actin, whereas it enhances it at low concentrations. The sequence is that of Profilin-1 from Olea europaea (Common olive).